Here is a 202-residue protein sequence, read N- to C-terminus: 3-isopropylmalate dehydratase small subunit 2 (202 aa).

It belongs to the LeuD family. LeuD type 1 subfamily. Heterodimer of LeuC and LeuD.

The enzyme catalyses (2R,3S)-3-isopropylmalate = (2S)-2-isopropylmalate. It functions in the pathway amino-acid biosynthesis; L-leucine biosynthesis; L-leucine from 3-methyl-2-oxobutanoate: step 2/4. In terms of biological role, catalyzes the isomerization between 2-isopropylmalate and 3-isopropylmalate, via the formation of 2-isopropylmaleate. This is 3-isopropylmalate dehydratase small subunit 2 from Bordetella parapertussis (strain 12822 / ATCC BAA-587 / NCTC 13253).